The sequence spans 66 residues: Antimicrobial peptide Eval967 (66 aa).

The signal sequence occupies residues 1 to 22 (MKFSALLPVFFLLLAVIDYCQA). Leu36 bears the Leucine amide mark. The propeptide occupies 37–66 (GKRDVKTQKYVDIKRRDLDLDDMLSKLFED).

This sequence belongs to the non-disulfide-bridged peptide (NDBP) superfamily. Short antimicrobial peptide (group 4) family. In terms of tissue distribution, expressed by the venom gland.

It is found in the secreted. In terms of biological role, probable antimicrobial peptide. Has no inhibitory activity against herpes simplex virus type 1 (HSV-1). The chain is Antimicrobial peptide Eval967 from Euscorpiops validus (Scorpion).